The sequence spans 128 residues: uncharacterized protein (128 aa).

The S1 motif domain occupies 6–74 (GSKLQGKITG…KDGKIGLSIK (69 aa)). Positions 72–128 (SIKKAKDRPQARPRNDFRPKESFEQKMNKFLKDSEDRLSSLKRNTESKRGGRGARRG) are disordered. Positions 78–120 (DRPQARPRNDFRPKESFEQKMNKFLKDSEDRLSSLKRNTESKR) are enriched in basic and acidic residues.

Belongs to the peptidase U57 family.

This is an uncharacterized protein from Bacillus subtilis (strain 168).